Reading from the N-terminus, the 159-residue chain is MQIWHMEPFPCGDRRLPHHVFPPKKITTTQLGALAGVQYYKVDLEDTASMKKRLSAVKTEKNVTFTDVFTVSETMLDFDDKMEQFYEAQTQKEDVISLVVEGTCYYDVEPEDDSWIRVQLEKGDLIVIPKGLSHRFTTTPQNFVKIQRFFSRKVEGTQG.

It belongs to the acireductone dioxygenase (ARD) family.

Its subcellular location is the cytoplasm. The protein resides in the nucleus. Its function is as follows. Probable inactive acireductone dioxygenase. This is Probable inactive acireductone dioxygenase 2 from Caenorhabditis briggsae.